We begin with the raw amino-acid sequence, 435 residues long: Casein kinase I homolog 2 (435 aa).

Positions 12–282 (YRVGRKIGEG…FLQELFDDVL (271 aa)) constitute a Protein kinase domain. ATP contacts are provided by residues 18-26 (IGEGSFGVI) and K41. The Proton acceptor role is filled by D131. Residue S361 is modified to Phosphoserine.

This sequence belongs to the protein kinase superfamily. CK1 Ser/Thr protein kinase family. Casein kinase I subfamily.

Its subcellular location is the cytoplasm. It carries out the reaction L-seryl-[protein] + ATP = O-phospho-L-seryl-[protein] + ADP + H(+). It catalyses the reaction L-threonyl-[protein] + ATP = O-phospho-L-threonyl-[protein] + ADP + H(+). Functionally, casein kinases are operationally defined by their preferential utilization of acidic proteins such as caseins as substrates. May contribute to the regulation of morphology. This is Casein kinase I homolog 2 (cki2) from Schizosaccharomyces pombe (strain 972 / ATCC 24843) (Fission yeast).